The sequence spans 944 residues: Putative ATP-dependent RNA helicase (944 aa).

A Helicase ATP-binding domain is found at Thr-66–Leu-235. His-79–Thr-86 serves as a coordination point for ATP. The DEAH box signature appears at Asp-183–His-186. The Helicase C-terminal domain occupies Cys-451–Gln-523.

It belongs to the DEAD box helicase family. DEAH subfamily.

It catalyses the reaction ATP + H2O = ADP + phosphate + H(+). The protein is Putative ATP-dependent RNA helicase of Heliothis virescens ascovirus 3e (HvAV-3e).